Reading from the N-terminus, the 702-residue chain is Antigen peptide transporter 2 (702 aa).

Residues 1 to 6 are Lumenal-facing; it reads MALSYL. The chain crosses the membrane as a helical span at residues 7–27; the sequence is RPWVSLLLADMALLGLLQGSL. The Cytoplasmic segment spans residues 28–56; sequence GNLLPQGLPGLWIEGTLRLGVLWGLLKVG. A helical membrane pass occupies residues 57–77; sequence ELLGLVGTLLPLLCLATPLFF. At 78 to 98 the chain is on the lumenal side; that stretch reads SLRALVGGTASTSVVRVASAS. A helical membrane pass occupies residues 99–119; the sequence is WGWLLAGYGAVALSWAVWAVL. Topologically, residues 120–147 are cytoplasmic; the sequence is SPAGVQEKEPGQENRTLMKRLLKLSRPD. The helical transmembrane segment at 148–168 threads the bilayer; it reads LPFLIAAFFFLVVAVWGETLI. The ABC transmembrane type-1 domain occupies 151 to 434; sequence LIAAFFFLVV…LVYMYGDMLS (284 aa). The Lumenal segment spans residues 169 to 186; that stretch reads PRYSGRVIDILGGDFDPD. A helical transmembrane segment spans residues 187–207; it reads AFASAIFFMCLFSVGSSFSAG. Residues 208 to 265 lie on the Cytoplasmic side of the membrane; sequence CRGGSFLFTMSRINLRIREQLFSSLLRQDLGFFQETKTGELNSRLSSDTSLMSRWLPF. The helical transmembrane segment at 266–286 threads the bilayer; that stretch reads NANILLRSLVKVVGLYFFMLQ. Topologically, residues 287-292 are lumenal; that stretch reads VSPRLT. Residues 293–313 traverse the membrane as a helical segment; it reads FLSLLDLPLTIAAEKVYNPRH. The interval 300-388 is part of the peptide-binding site; the sequence is PLTIAAEKVY…RRVMALGMQV (89 aa). Over 314–373 the chain is Cytoplasmic; the sequence is QAVLKEIQDAVAKAGQVVREAVGGLQTVRSFGAEEQEVSHYKEALERCRQLWWRRDLEKD. A helical transmembrane segment spans residues 374 to 394; that stretch reads VYLVIRRVMALGMQVLILNCG. Topologically, residues 395–407 are lumenal; it reads VQQILAGEVTRGG. Residues 408–428 form a helical membrane-spanning segment; that stretch reads LLSFLLYQEEVGQYVRNLVYM. The part of the peptide-binding site stretch occupies residues 413-432; sequence LYQEEVGQYVRNLVYMYGDM. Over 429–702 the chain is Cytoplasmic; the sequence is YGDMLSNVGA…AHLVQQRLEA (274 aa). Positions 467–701 constitute an ABC transporter domain; it reads VEFQDVSFSY…YAHLVQQRLE (235 aa). 502–509 contacts ATP; it reads GPNGSGKS.

It belongs to the ABC transporter superfamily. ABCB family. MHC peptide exporter (TC 3.A.1.209) subfamily. As to quaternary structure, heterodimer of TAP1 and TAP2 (TAP1-TAP2). A component of the peptide loading complex (PLC), interacts via TAPBP with MHCI heterodimer; this interaction mediates peptide-MHCI assembly. It depends on Mg(2+) as a cofactor.

The protein localises to the endoplasmic reticulum membrane. It carries out the reaction a peptide antigen(in) + ATP + H2O = a peptide antigen(out) + ADP + phosphate + H(+). Functionally, ABC transporter associated with antigen processing. In complex with TAP1 mediates unidirectional translocation of peptide antigens from cytosol to endoplasmic reticulum (ER) for loading onto MHC class I (MHCI) molecules. Uses the chemical energy of ATP to export peptides against the concentration gradient. During the transport cycle alternates between 'inward-facing' state with peptide binding site facing the cytosol to 'outward-facing' state with peptide binding site facing the ER lumen. Peptide antigen binding to ATP-loaded TAP1-TAP2 induces a switch to hydrolysis-competent 'outward-facing' conformation ready for peptide loading onto nascent MHCI molecules. Subsequently ATP hydrolysis resets the transporter to the 'inward facing' state for a new cycle. As a component of the peptide loading complex (PLC), acts as a molecular scaffold essential for peptide-MHCI assembly and antigen presentation. The sequence is that of Antigen peptide transporter 2 (Tap2) from Mus musculus (Mouse).